The sequence spans 500 residues: Galactofuranose transporter ATP-binding protein YtfR (500 aa).

2 consecutive ABC transporter domains span residues 10 to 245 (LRTE…LGRE) and 259 to 497 (LSDK…IMNA). Residue 42 to 49 (GENGAGKS) participates in ATP binding.

It belongs to the ABC transporter superfamily. The complex is composed of two ATP-binding proteins (YtfR), two transmembrane proteins (YtfT and YjfF) and a solute-binding protein (YtfQ).

Its subcellular location is the cell inner membrane. It carries out the reaction D-galactofuranose(out) + ATP + H2O = D-galactofuranose(in) + ADP + phosphate + H(+). In terms of biological role, part of the ABC transporter complex YtfQRT-YjfF involved in galactofuranose transport. Responsible for energy coupling to the transport system. The protein is Galactofuranose transporter ATP-binding protein YtfR (ytfR) of Escherichia coli (strain K12).